The following is a 70-amino-acid chain: Small ribosomal subunit protein bS21 (70 aa).

Residues 40–70 form a disordered region; that stretch reads KPTAERKRKHAAAVKRHYKRIRSQQLPPRLY. Residues 45 to 61 are compositionally biased toward basic residues; it reads RKRKHAAAVKRHYKRIR.

This sequence belongs to the bacterial ribosomal protein bS21 family.

The sequence is that of Small ribosomal subunit protein bS21 from Bordetella parapertussis (strain 12822 / ATCC BAA-587 / NCTC 13253).